Reading from the N-terminus, the 1112-residue chain is Phytochrome E (1112 aa).

The segment at 1-20 (MGFESSSSAASNMKPQPQKS) is disordered. In terms of domain architecture, GAF spans 217-387 (DIGALCDTVV…AFGLQLQMEL (171 aa)). Cysteine 322 provides a ligand contact to phytochromobilin. PAS domains lie at 595-666 (FVCE…LQGE) and 732-803 (DYKT…LISL). Residues 877–1096 (YVRQEIKNPL…FFQVDLQVKT (220 aa)) form the Histidine kinase domain.

Belongs to the phytochrome family. In terms of assembly, homodimer. In terms of processing, contains one covalently linked phytochromobilin chromophore.

In terms of biological role, regulatory photoreceptor which exists in two forms that are reversibly interconvertible by light: the Pr form that absorbs maximally in the red region of the spectrum and the Pfr form that absorbs maximally in the far-red region. Photoconversion of Pr to Pfr induces an array of morphogenic responses, whereas reconversion of Pfr to Pr cancels the induction of those responses. Pfr controls the expression of a number of nuclear genes including those encoding the small subunit of ribulose-bisphosphate carboxylase, chlorophyll A/B binding protein, protochlorophyllide reductase, rRNA, etc. It also controls the expression of its own gene(s) in a negative feedback fashion. This chain is Phytochrome E (PHYE), found in Arabidopsis thaliana (Mouse-ear cress).